A 329-amino-acid polypeptide reads, in one-letter code: 36 kDa antigen (329 aa).

A helical transmembrane segment spans residues 11-31 (AILTGGGALLLGLIVLFYLAY).

Belongs to the membrane fusion protein (MFP) (TC 8.A.1) family.

It localises to the membrane. In Helicobacter pylori (strain ATCC 700392 / 26695) (Campylobacter pylori), this protein is 36 kDa antigen.